The primary structure comprises 224 residues: Ornithine decarboxylase antizyme (224 aa).

The protein belongs to the ODC antizyme family. In terms of assembly, interacts with ODC and thereby sterically blocks ODC homodimerization.

Functionally, ornithine decarboxylase (ODC) antizyme protein that negatively regulates ODC activity and intracellular polyamine biosynthesis in response to increased intracellular polyamine levels. Binds to ODC monomers, inhibiting the assembly of the functional ODC homodimer, and targets the monomers for ubiquitin-independent proteolytic destruction by the 26S proteasome. The chain is Ornithine decarboxylase antizyme (spa1) from Schizosaccharomyces octosporus (Fission yeast).